The primary structure comprises 343 residues: Methionine import ATP-binding protein MetN (343 aa).

One can recognise an ABC transporter domain in the interval 2–241 (IKLSNITKVF…PKTPLAQKFI (240 aa)). Residue 40–46 (SGAGKST) coordinates ATP. Residues 265 to 343 (CVPMLRLEFT…HVKVEVLGYV (79 aa)) form a C2 domain region. L-methionine contacts are provided by residues 278-283 (VDAPLL) and 295-296 (NI).

Belongs to the ABC transporter superfamily. Methionine importer (TC 3.A.1.24) family. The complex is composed of two ATP-binding proteins (MetN), two transmembrane proteins (MetI) and a solute-binding protein (MetQ).

The protein resides in the cell inner membrane. It carries out the reaction L-methionine(out) + ATP + H2O = L-methionine(in) + ADP + phosphate + H(+). The catalysed reaction is D-methionine(out) + ATP + H2O = D-methionine(in) + ADP + phosphate + H(+). ATPase activity is inhibited by intracellular L-methionine. Binding of methionine to the dimerized C-terminal regulatory domain stabilizes an inward-facing, ATPase-inactive conformation of the transporter, and as a consequence, the rate of ATP hydrolysis decreases. ADP is a competitive inhibitor. Part of the ABC transporter complex MetNIQ involved in methionine import. Responsible for energy coupling to the transport system. It has also been shown to be involved in formyl-L-methionine transport. In Escherichia coli (strain K12), this protein is Methionine import ATP-binding protein MetN.